The sequence spans 701 residues: Probable cytosolic oligopeptidase A (701 aa).

The residue at position 2 (Ala-2) is an N-acetylalanine. A coiled-coil region spans residues 148–194; the sequence is IALEDDKREEFNKIEQELEKLSHKFSENVLDATKKFEKLITDKKEIE. A Zn(2+)-binding site is contributed by His-483. Residue Glu-484 is part of the active site. Residues His-487 and Glu-513 each contribute to the Zn(2+) site. 615–621 contacts substrate; that stretch reads HIFAGGY.

The protein belongs to the peptidase M3 family. The cofactor is Zn(2+).

It localises to the cytoplasm. The protein resides in the cytosol. It carries out the reaction Hydrolysis of oligopeptides, with broad specificity. Gly or Ala commonly occur as P1 or P1' residues, but more distant residues are also important, as is shown by the fact that Z-Gly-Pro-Gly-|-Gly-Pro-Ala is cleaved, but not Z-(Gly)(5).. Its activity is regulated as follows. Inhibited by salicylic acid. Its function is as follows. Oligopeptidase that may be involved in the degradation of proteasome-generated peptides. Binds salicylic acid. This is Probable cytosolic oligopeptidase A from Arabidopsis thaliana (Mouse-ear cress).